A 153-amino-acid chain; its full sequence is Aspartate carbamoyltransferase regulatory chain (153 aa).

The Zn(2+) site is built by Cys109, Cys114, Cys138, and Cys141.

Belongs to the PyrI family. In terms of assembly, contains catalytic and regulatory chains. The cofactor is Zn(2+).

Involved in allosteric regulation of aspartate carbamoyltransferase. The chain is Aspartate carbamoyltransferase regulatory chain from Vibrio campbellii (strain ATCC BAA-1116).